Here is a 348-residue protein sequence, read N- to C-terminus: Phospho-2-dehydro-3-deoxyheptonate aldolase, Trp-sensitive (348 aa).

The protein belongs to the class-I DAHP synthase family.

The catalysed reaction is D-erythrose 4-phosphate + phosphoenolpyruvate + H2O = 7-phospho-2-dehydro-3-deoxy-D-arabino-heptonate + phosphate. The protein operates within metabolic intermediate biosynthesis; chorismate biosynthesis; chorismate from D-erythrose 4-phosphate and phosphoenolpyruvate: step 1/7. Stereospecific condensation of phosphoenolpyruvate (PEP) and D-erythrose-4-phosphate (E4P) giving rise to 3-deoxy-D-arabino-heptulosonate-7-phosphate (DAHP). The polypeptide is Phospho-2-dehydro-3-deoxyheptonate aldolase, Trp-sensitive (aroH) (Buchnera aphidicola subsp. Schizaphis graminum (strain Sg)).